The following is a 391-amino-acid chain: Lipoyl synthase, mitochondrial (391 aa).

A mitochondrion-targeting transit peptide spans Met1–Val44. Positions 120, 125, 131, 150, 154, 157, and 365 each coordinate [4Fe-4S] cluster. The 220-residue stretch at Lys135 to Leu354 folds into the Radical SAM core domain.

It belongs to the radical SAM superfamily. Lipoyl synthase family. It depends on [4Fe-4S] cluster as a cofactor.

Its subcellular location is the mitochondrion. It carries out the reaction [[Fe-S] cluster scaffold protein carrying a second [4Fe-4S](2+) cluster] + N(6)-octanoyl-L-lysyl-[protein] + 2 oxidized [2Fe-2S]-[ferredoxin] + 2 S-adenosyl-L-methionine + 4 H(+) = [[Fe-S] cluster scaffold protein] + N(6)-[(R)-dihydrolipoyl]-L-lysyl-[protein] + 4 Fe(3+) + 2 hydrogen sulfide + 2 5'-deoxyadenosine + 2 L-methionine + 2 reduced [2Fe-2S]-[ferredoxin]. It participates in protein modification; protein lipoylation via endogenous pathway; protein N(6)-(lipoyl)lysine from octanoyl-[acyl-carrier-protein]: step 2/2. Functionally, catalyzes the radical-mediated insertion of two sulfur atoms into the C-6 and C-8 positions of the octanoyl moiety bound to the lipoyl domains of lipoate-dependent enzymes, thereby converting the octanoylated domains into lipoylated derivatives. This Clavispora lusitaniae (strain ATCC 42720) (Yeast) protein is Lipoyl synthase, mitochondrial.